The following is a 198-amino-acid chain: Peroxiredoxin-2 (198 aa).

Ala-2 bears the N-acetylalanine mark. Residues 6–164 (ARIGKPAPDF…ALRLVQAFQY (159 aa)) enclose the Thioredoxin domain. Cys-51 functions as the Cysteine sulfenic acid (-SOH) intermediate in the catalytic mechanism. Ser-112 carries the phosphoserine modification. Position 182 is a phosphothreonine (Thr-182). Residue Lys-196 is modified to N6-acetyllysine.

Belongs to the peroxiredoxin family. AhpC/Prx1 subfamily. In terms of assembly, homodimer; disulfide-linked, upon oxidation. 5 homodimers assemble to form a ring-like decamer. Interacts with TIPIN. The enzyme can be inactivated by further oxidation of the cysteine sulfenic acid (C(P)-SOH) to sulphinic acid (C(P)-SO2H) instead of its condensation to a disulfide bond. It can be reactivated by forming a transient disulfide bond with sulfiredoxin SRXN1, which reduces the cysteine sulfinic acid in an ATP- and Mg-dependent manner. In terms of processing, acetylation increases resistance to transition to high molecular-mass complexes. Deacetylated by HDAC6 which decreases reducing activity.

Its subcellular location is the cytoplasm. It catalyses the reaction a hydroperoxide + [thioredoxin]-dithiol = an alcohol + [thioredoxin]-disulfide + H2O. In terms of biological role, thiol-specific peroxidase that catalyzes the reduction of hydrogen peroxide and organic hydroperoxides to water and alcohols, respectively. Plays a role in cell protection against oxidative stress by detoxifying peroxides and as sensor of hydrogen peroxide-mediated signaling events. Might participate in the signaling cascades of growth factors and tumor necrosis factor-alpha by regulating the intracellular concentrations of H(2)O(2). This Macaca fascicularis (Crab-eating macaque) protein is Peroxiredoxin-2 (PRDX2).